The chain runs to 292 residues: MFRSFSTAAKQAVKGTYVQRAIVGGAAVVGIGASTMLYADSLTADAMTAAEHGLHAPGYGWSHNGPLETFDHSSIRRGYQVYREVCAACHSLDRVAWRTMVGVSHTNAEVRAMAEEFEYDDEPDDQGNPKKRPGKLADYVPGPYPNEQAARAANQGALPPDLSLIVKARHGGPDYIFALLTGYPEEPPAGVVLPPGANYNPYFPGGSIAMGRVLFDDLVEYEDGTPATTSQMAKDVTTFLHWCSEPEHDERKRLGLKAMIVLSSLYLLSVWVKKFKWASIKSRKIVFNPPKK.

The N-terminal 46 residues, 1–46 (MFRSFSTAAKQAVKGTYVQRAIVGGAAVVGIGASTMLYADSLTADA), are a transit peptide targeting the mitochondrion. Residues 47–253 (MTAAEHGLHA…SEPEHDERKR (207 aa)) are Mitochondrial intermembrane-facing. Positions 73-226 (SSIRRGYQVY…DLVEYEDGTP (154 aa)) constitute a Cytochrome c domain. 3 residues coordinate heme c: C86, C89, and H90. Residues 117 to 137 (FEYDDEPDDQGNPKKRPGKLA) form a disordered region. M210 serves as a coordination point for heme c. Residues 254-272 (LGLKAMIVLSSLYLLSVWV) form a helical membrane-spanning segment. Over 273 to 292 (KKFKWASIKSRKIVFNPPKK) the chain is Mitochondrial matrix.

This sequence belongs to the cytochrome c family. Component of the ubiquinol-cytochrome c oxidoreductase (cytochrome b-c1 complex, complex III, CIII), a multisubunit enzyme composed of 3 respiratory subunits cytochrome b, cytochrome c1 and Rieske protein, 2 core protein subunits, and additional low-molecular weight protein subunits. The complex exists as an obligatory dimer and forms supercomplexes (SCs) in the inner mitochondrial membrane with cytochrome c oxidase (complex IV, CIV). Heme c serves as cofactor.

It localises to the mitochondrion inner membrane. It catalyses the reaction a quinol + 2 Fe(III)-[cytochrome c](out) = a quinone + 2 Fe(II)-[cytochrome c](out) + 2 H(+)(out). Functionally, component of the ubiquinol-cytochrome c oxidoreductase, a multisubunit transmembrane complex that is part of the mitochondrial electron transport chain which drives oxidative phosphorylation. The respiratory chain contains 3 multisubunit complexes succinate dehydrogenase (complex II, CII), ubiquinol-cytochrome c oxidoreductase (cytochrome b-c1 complex, complex III, CIII) and cytochrome c oxidase (complex IV, CIV), that cooperate to transfer electrons derived from NADH and succinate to molecular oxygen, creating an electrochemical gradient over the inner membrane that drives transmembrane transport and the ATP synthase. The cytochrome b-c1 complex catalyzes electron transfer from ubiquinol to cytochrome c, linking this redox reaction to translocation of protons across the mitochondrial inner membrane, with protons being carried across the membrane as hydrogens on the quinol. In the process called Q cycle, 2 protons are consumed from the matrix, 4 protons are released into the intermembrane space and 2 electrons are passed to cytochrome c. Cytochrome c1 is a catalytic core subunit containing a c-type heme. It transfers electrons from the [2Fe-2S] iron-sulfur cluster of the Rieske protein to cytochrome c. The protein is Cytochrome c1, heme protein, mitochondrial (CYT1) of Kluyveromyces lactis (strain ATCC 8585 / CBS 2359 / DSM 70799 / NBRC 1267 / NRRL Y-1140 / WM37) (Yeast).